The primary structure comprises 104 residues: ATP-dependent Clp protease adapter protein ClpS (104 aa).

Belongs to the ClpS family. Binds to the N-terminal domain of the chaperone ClpA.

Involved in the modulation of the specificity of the ClpAP-mediated ATP-dependent protein degradation. The chain is ATP-dependent Clp protease adapter protein ClpS from Hydrogenovibrio crunogenus (strain DSM 25203 / XCL-2) (Thiomicrospira crunogena).